The following is a 324-amino-acid chain: GTPase Era (324 aa).

The region spanning 31 to 199 is the Era-type G domain; that stretch reads KSGFIGIIGR…QELLVEHLEH (169 aa). Residues 39-46 are G1; it reads GRPNVGKS. A GTP-binding site is contributed by 39 to 46; the sequence is GRPNVGKS. Residues 65 to 69 form a G2 region; the sequence is QTTRN. The G3 stretch occupies residues 86 to 89; it reads DTPG. Residues 86-90 and 148-151 contribute to the GTP site; these read DTPGI and NKVD. Residues 148 to 151 form a G4 region; that stretch reads NKVD. The G5 stretch occupies residues 178–180; the sequence is FSA. One can recognise a KH type-2 domain in the interval 230-306; that stretch reads TREEVPHSVA…YLELFVKVQP (77 aa).

The protein belongs to the TRAFAC class TrmE-Era-EngA-EngB-Septin-like GTPase superfamily. Era GTPase family. Monomer.

The protein resides in the cytoplasm. It localises to the cell inner membrane. Its function is as follows. An essential GTPase that binds both GDP and GTP, with rapid nucleotide exchange. Plays a role in 16S rRNA processing and 30S ribosomal subunit biogenesis and possibly also in cell cycle regulation and energy metabolism. This chain is GTPase Era, found in Nostoc sp. (strain PCC 7120 / SAG 25.82 / UTEX 2576).